Reading from the N-terminus, the 112-residue chain is UPF0145 protein RB3016 (112 aa).

Belongs to the UPF0145 family.

The chain is UPF0145 protein RB3016 from Rhodopirellula baltica (strain DSM 10527 / NCIMB 13988 / SH1).